A 338-amino-acid chain; its full sequence is MDLVALQSLLDNTSFLVLFLTMLLYWGGAAFPNIPGLTGLGTLGVAIANLCMATLLGARWLEAGYFPLSNLYESLFFLAWGVTTMHLVAEWMSRSRWVGVITAPVAMGITAFAALSLPAEMQNSAPLVPALKSNWLMMHVSVMMISYAALLVGSLLAIAFLIVTKGQKIELRGSSVGNGSYRLRQPQNTTDETPVTVVAFQKTEPQSNGNTAVLASPDLQQLTTTPALSPQMLSLADTLDNISYRIIGLGFPLLTIGIIAGAVWANEAWGSYWSWDPKETWALITWLVFAAYLHARITRGWQGRQPAFLAAAGFFVVWVCYLGVNILGKGLHSYGWFF.

The next 8 helical transmembrane spans lie at 15–35 (FLVL…PNIP), 36–56 (GLTG…ATLL), 71–91 (LYES…VAEW), 97–117 (WVGV…ALSL), 142–162 (VMMI…AFLI), 246–266 (IIGL…VWAN), 273–293 (WSWD…AAYL), and 307–327 (AFLA…VNIL).

This sequence belongs to the CcmF/CycK/Ccl1/NrfE/CcsA family. As to quaternary structure, may interact with ccs1.

It localises to the cellular thylakoid membrane. Required during biogenesis of c-type cytochromes (cytochrome c6 and cytochrome f) at the step of heme attachment. The chain is Cytochrome c biogenesis protein CcsA from Picosynechococcus sp. (strain ATCC 27264 / PCC 7002 / PR-6) (Agmenellum quadruplicatum).